Consider the following 483-residue polypeptide: Macrophage receptor MARCO (483 aa).

At 1 to 48 (MGNKKALKEEAFLGSAEEGADFDQAMFPVMETFEINDPMPKKRNWGSF) the chain is on the cytoplasmic side. A helical; Signal-anchor for type II membrane protein transmembrane segment spans residues 49-69 (CTAVMAIHLILLTAGTTLLTL). Residues 70–483 (KVLSLQKWIL…HNEDAGVECR (414 aa)) lie on the Extracellular side of the membrane. 2 N-linked (GlcNAc...) asparagine glycosylation sites follow: Asn85 and Asn137. The tract at residues 146 to 386 (RIKGERGSPG…GEKGEKGQSF (241 aa)) is disordered. Residues 148–383 (KGERGSPGIP…GQKGEKGEKG (236 aa)) enclose the Collagen-like domain. Low complexity predominate over residues 153–166 (SPGIPGLQGPPGIK). A compositionally biased stretch (basic and acidic residues) spans 193–216 (KGSKGDKGLIGPKGEHGTKGDKGD). A compositionally biased stretch (low complexity) spans 273 to 286 (VPGTPGAAGPSGAK). The segment covering 376–386 (KGEKGEKGQSF) has biased composition (basic and acidic residues). Positions 389-483 (VRIVGGTNRG…HNEDAGVECR (95 aa)) constitute an SRCR domain. 3 cysteine pairs are disulfide-bonded: Cys412–Cys472, Cys425–Cys482, and Cys452–Cys462.

Homotrimer; disulfide-linked. Trimers may assemble in larger oligomers thus resulting in the creation of a large surface capable of interacting with very large ligands. N-glycosylated. In terms of tissue distribution, expressed in alveolar macrophages, macrophages of lymph node sinues, and Kupffer cells in liver (at protein level).

It is found in the cell membrane. Pattern recognition receptor (PRR) which binds Gram-positive and Gram-negative bacteria. Also plays a role in binding of unopsonized particles by alveolar macrophages. Binds to the secretoglobin SCGB3A2. This is Macrophage receptor MARCO (MARCO) from Mesocricetus auratus (Golden hamster).